The sequence spans 120 residues: Large ribosomal subunit protein uL22 (120 aa).

The interval 1–20 (MFVNRRYTARGKNLPSSPKK) is disordered.

The protein belongs to the universal ribosomal protein uL22 family. In terms of assembly, part of the 50S ribosomal subunit.

Functionally, this protein binds specifically to 23S rRNA; its binding is stimulated by other ribosomal proteins, e.g. L4, L17, and L20. It is important during the early stages of 50S assembly. It makes multiple contacts with different domains of the 23S rRNA in the assembled 50S subunit and ribosome. In terms of biological role, the globular domain of the protein is located near the polypeptide exit tunnel on the outside of the subunit, while an extended beta-hairpin is found that lines the wall of the exit tunnel in the center of the 70S ribosome. In Borrelia turicatae (strain 91E135), this protein is Large ribosomal subunit protein uL22.